The sequence spans 705 residues: ATP-dependent DNA helicase Q-like 2 (705 aa).

Residues 1–30 adopt a coiled-coil conformation; the sequence is MESEAIQEDLQNLDVELKDVQGQISALIEH. The Helicase ATP-binding domain occupies 98 to 273; it reads INAIMTGRDV…IEMLHIPKCV (176 aa). Residue 111 to 118 participates in ATP binding; the sequence is MAAGGGKS. Positions 217-220 match the DEAH box motif; it reads DEAH. The Helicase C-terminal domain occupies 298–450; sequence VVDEIAEFIR…DIVRYCQSKT (153 aa). The region spanning 591–670 is the HRDC domain; sequence SITFSGLELK…MRHEAVSEQL (80 aa). Residues 668–705 are disordered; it reads EQLVEDPTKEETCKSRLRKRAKTQKDVVLVESSGEEEA.

The protein belongs to the helicase family. RecQ subfamily. As to quaternary structure, interacts with WEX. Mg(2+) serves as cofactor. It depends on Mn(2+) as a cofactor. Expressed in shoots and flowers. Expressed in young leaves, inflorescences, roots, shoot apical meristem, young siliques, and mature green siliques.

It is found in the nucleus. The enzyme catalyses Couples ATP hydrolysis with the unwinding of duplex DNA by translocating in the 3'-5' direction.. The catalysed reaction is ATP + H2O = ADP + phosphate + H(+). In terms of biological role, 3'-5' DNA helicase that may play a role in the repair of DNA. Its DNA unwinding activity in vitro is dependent on magnesium, and ATP or dATP. Can use GTP/dGTP, CTP/dCTP or UTP/dUTP as nucleotide cofactors. Catalyzes Holliday junction branch migration and replication fork regression. Disrupts D-loop structures. Unwinds G-quadruplex DNA, found in telomeric DNA. The sequence is that of ATP-dependent DNA helicase Q-like 2 from Arabidopsis thaliana (Mouse-ear cress).